The chain runs to 261 residues: tRNA pseudouridine synthase A (261 aa).

Residue aspartate 51 is the Nucleophile of the active site. Residue tyrosine 109 participates in substrate binding.

This sequence belongs to the tRNA pseudouridine synthase TruA family. As to quaternary structure, homodimer.

The enzyme catalyses uridine(38/39/40) in tRNA = pseudouridine(38/39/40) in tRNA. Functionally, formation of pseudouridine at positions 38, 39 and 40 in the anticodon stem and loop of transfer RNAs. The protein is tRNA pseudouridine synthase A of Shewanella loihica (strain ATCC BAA-1088 / PV-4).